The chain runs to 212 residues: Imidazole glycerol phosphate synthase subunit HisH 2 (212 aa).

The Glutamine amidotransferase type-1 domain maps to 3–212; the sequence is RVAIIDYGIN…LMSNFLQWNP (210 aa). C82 serves as the catalytic Nucleophile. Catalysis depends on residues H192 and E194.

As to quaternary structure, heterodimer of HisH and HisF.

It localises to the cytoplasm. It carries out the reaction 5-[(5-phospho-1-deoxy-D-ribulos-1-ylimino)methylamino]-1-(5-phospho-beta-D-ribosyl)imidazole-4-carboxamide + L-glutamine = D-erythro-1-(imidazol-4-yl)glycerol 3-phosphate + 5-amino-1-(5-phospho-beta-D-ribosyl)imidazole-4-carboxamide + L-glutamate + H(+). It catalyses the reaction L-glutamine + H2O = L-glutamate + NH4(+). The protein operates within amino-acid biosynthesis; L-histidine biosynthesis; L-histidine from 5-phospho-alpha-D-ribose 1-diphosphate: step 5/9. In terms of biological role, IGPS catalyzes the conversion of PRFAR and glutamine to IGP, AICAR and glutamate. The HisH subunit provides the glutamine amidotransferase activity that produces the ammonia necessary to HisF for the synthesis of IGP and AICAR. This Nitrobacter winogradskyi (strain ATCC 25391 / DSM 10237 / CIP 104748 / NCIMB 11846 / Nb-255) protein is Imidazole glycerol phosphate synthase subunit HisH 2.